The chain runs to 497 residues: Serine hydroxymethyltransferase, mitochondrial (497 aa).

The N-terminal 27 residues, 1-27, are a transit peptide targeting the mitochondrion; that stretch reads MFIRRLHTSSRRLTCGEALRACQQTGA. Lys-272 carries the N6-(pyridoxal phosphate)lysine modification.

It belongs to the SHMT family. Homotetramer. The cofactor is pyridoxal 5'-phosphate.

Its subcellular location is the mitochondrion. The catalysed reaction is (6R)-5,10-methylene-5,6,7,8-tetrahydrofolate + glycine + H2O = (6S)-5,6,7,8-tetrahydrofolate + L-serine. It functions in the pathway one-carbon metabolism; tetrahydrofolate interconversion. In terms of biological role, interconversion of serine and glycine. This is Serine hydroxymethyltransferase, mitochondrial (SHM1) from Eremothecium gossypii (strain ATCC 10895 / CBS 109.51 / FGSC 9923 / NRRL Y-1056) (Yeast).